Consider the following 83-residue polypeptide: Small ribosomal subunit protein bS16 (83 aa).

Belongs to the bacterial ribosomal protein bS16 family.

This chain is Small ribosomal subunit protein bS16, found in Pseudomonas putida (strain ATCC 700007 / DSM 6899 / JCM 31910 / BCRC 17059 / LMG 24140 / F1).